Consider the following 314-residue polypeptide: DNA-directed RNA polymerase subunit alpha (314 aa).

Positions 1 to 228 (MIEIEKPRIE…EHLNIFVDLT (228 aa)) are alpha N-terminal domain (alpha-NTD). Positions 245-314 (KEKVLEMSIE…DLGLGLRKED (70 aa)) are alpha C-terminal domain (alpha-CTD).

The protein belongs to the RNA polymerase alpha chain family. In terms of assembly, homodimer. The RNAP catalytic core consists of 2 alpha, 1 beta, 1 beta' and 1 omega subunit. When a sigma factor is associated with the core the holoenzyme is formed, which can initiate transcription.

The enzyme catalyses RNA(n) + a ribonucleoside 5'-triphosphate = RNA(n+1) + diphosphate. In terms of biological role, DNA-dependent RNA polymerase catalyzes the transcription of DNA into RNA using the four ribonucleoside triphosphates as substrates. This chain is DNA-directed RNA polymerase subunit alpha, found in Macrococcus caseolyticus (strain JCSC5402) (Macrococcoides caseolyticum).